Reading from the N-terminus, the 99-residue chain is HTH-type transcriptional regulator YgaV (99 aa).

An HTH arsR-type domain is found at Leu7–Pro99. Positions Ala41–Asp64 form a DNA-binding region, H-T-H motif.

In the presence of H(2)S, two cysteine residues form an intramolecular tetrasulfide bond, which attenuates the binding of YgaV to DNA. Both unmodified YgaV and sulfide-modified YgaV can probably function as either a repressor or an activator. Binds heme, which may influence the DNA-binding affinity. Transcriptional regulator that regulates large-scale gene expression in response to sulfide. May act as a global regulator responsible for redox homeostasis. It functions as both a repressor and an activator. In the absence of sulfide compounds, it negatively regulates many anaerobic respiratory genes, including formate, fumarate, lactate, nitrate and nitrite reductase genes. In the presence of hydrogen sulfide (H(2)S), YgaV activity is attenuated, leading to the expression of anaerobic respiratory and ROS scavenging genes, which contributes to redox homeostasis, reactive oxygen species (ROS) scavenging and antibiotic tolerance. It responds to H(2)O(2) scavenging and increases antibiotic tolerance under H(2)S-atmospheric conditions. It also negatively regulates its own expression by binding to the ygaVP promoter region. May also be involved in regulatory mechanisms that operate independently of sulfide. The chain is HTH-type transcriptional regulator YgaV (ygaV) from Escherichia coli (strain K12).